Consider the following 360-residue polypeptide: Photosystem II protein D1 (360 aa).

Helical transmembrane passes span tyrosine 29 to serine 46, histidine 118 to leucine 133, and tryptophan 142 to alanine 156. Residue histidine 118 coordinates chlorophyll a. Tyrosine 126 is a pheophytin a binding site. [CaMn4O5] cluster is bound by residues aspartate 170 and glutamate 189. The chain crosses the membrane as a helical span at residues phenylalanine 197–leucine 218. Histidine 198 is a binding site for chlorophyll a. A quinone contacts are provided by residues histidine 215 and serine 264–phenylalanine 265. Residue histidine 215 coordinates Fe cation. Histidine 272 is a binding site for Fe cation. A helical transmembrane segment spans residues phenylalanine 274–methionine 288. Residues histidine 332, glutamate 333, aspartate 342, and alanine 344 each coordinate [CaMn4O5] cluster. Positions serine 345–glycine 360 are excised as a propeptide.

This sequence belongs to the reaction center PufL/M/PsbA/D family. As to quaternary structure, PSII is composed of 1 copy each of membrane proteins PsbA, PsbB, PsbC, PsbD, PsbE, PsbF, PsbH, PsbI, PsbJ, PsbK, PsbL, PsbM, PsbT, PsbX, PsbY, PsbZ, Psb30/Ycf12, at least 3 peripheral proteins of the oxygen-evolving complex and a large number of cofactors. It forms dimeric complexes. The D1/D2 heterodimer binds P680, chlorophylls that are the primary electron donor of PSII, and subsequent electron acceptors. It shares a non-heme iron and each subunit binds pheophytin, quinone, additional chlorophylls, carotenoids and lipids. D1 provides most of the ligands for the Mn4-Ca-O5 cluster of the oxygen-evolving complex (OEC). There is also a Cl(-1) ion associated with D1 and D2, which is required for oxygen evolution. The PSII complex binds additional chlorophylls, carotenoids and specific lipids. is required as a cofactor. Post-translationally, tyr-161 forms a radical intermediate that is referred to as redox-active TyrZ, YZ or Y-Z. In terms of processing, C-terminally processed by CTPA; processing is essential to allow assembly of the oxygen-evolving complex and thus photosynthetic growth.

The protein localises to the plastid. It is found in the chloroplast thylakoid membrane. The catalysed reaction is 2 a plastoquinone + 4 hnu + 2 H2O = 2 a plastoquinol + O2. Its function is as follows. Photosystem II (PSII) is a light-driven water:plastoquinone oxidoreductase that uses light energy to abstract electrons from H(2)O, generating O(2) and a proton gradient subsequently used for ATP formation. It consists of a core antenna complex that captures photons, and an electron transfer chain that converts photonic excitation into a charge separation. The D1/D2 (PsbA/PsbD) reaction center heterodimer binds P680, the primary electron donor of PSII as well as several subsequent electron acceptors. This is Photosystem II protein D1 from Trieres chinensis (Marine centric diatom).